A 633-amino-acid polypeptide reads, in one-letter code: DNA mismatch repair protein MutL (633 aa).

2 disordered regions span residues 336-364 and 384-405; these read VRPDDQLAPPGATSLTEPRPTGAAAGEFG and GWSGGASSSGASSGYSAYTRPE. Low complexity predominate over residues 388–401; it reads GASSSGASSGYSAY.

It belongs to the DNA mismatch repair MutL/HexB family.

Its function is as follows. This protein is involved in the repair of mismatches in DNA. It is required for dam-dependent methyl-directed DNA mismatch repair. May act as a 'molecular matchmaker', a protein that promotes the formation of a stable complex between two or more DNA-binding proteins in an ATP-dependent manner without itself being part of a final effector complex. This is DNA mismatch repair protein MutL from Pseudomonas paraeruginosa (strain DSM 24068 / PA7) (Pseudomonas aeruginosa (strain PA7)).